Here is a 152-residue protein sequence, read N- to C-terminus: Eukaryotic translation initiation factor 2 subunit 3 (152 aa).

Position 1 is an N-acetylalanine (Ala-1). 51 to 54 (NKID) lines the GTP pocket.

The protein belongs to the TRAFAC class translation factor GTPase superfamily. Classic translation factor GTPase family. EIF2G subfamily. In terms of assembly, eukaryotic translation initiation factor 2 eIF2 is a heterotrimeric complex composed of an alpha (EIF2S1), a beta (EIF2S2) and a gamma (EIF2S3) chain. eIF2 is member of the 43S pre-initiation complex (43S PIC). Interacts (via C-terminus) with CDC123; the interaction is direct.

It is found in the cytoplasm. Its subcellular location is the cytosol. Functionally, member of the eIF2 complex that functions in the early steps of protein synthesis by forming a ternary complex with GTP and initiator tRNA. This complex binds to a 40S ribosomal subunit, followed by mRNA binding to form the 43S pre-initiation complex (43S PIC). Junction of the 60S ribosomal subunit to form the 80S initiation complex is preceded by hydrolysis of the GTP bound to eIF2 and release of an eIF2-GDP binary complex. In order for eIF2 to recycle and catalyze another round of initiation, the GDP bound to eIF2 must exchange with GTP by way of a reaction catalyzed by eIF-2B. This is Eukaryotic translation initiation factor 2 subunit 3 (EIF2S3) from Oryctolagus cuniculus (Rabbit).